A 1055-amino-acid chain; its full sequence is Leukotoxin (1055 aa).

A coiled-coil region spans residues 11–49 (QQAAQFANSVADRAKENIDAAKEQLQKALDKLGKTGKKL). 2 cholesterol recognition/amino acid consensus (CRAC) region regions span residues 334–340 (LEEYSKR) and 502–506 (VDYLK). Hemolysin-type calcium-binding repeat units lie at residues 721 to 738 (IGSTLRDKFYGSKFNDVF), 739 to 756 (HGHDGDDLIYGYDGDDRL), 757 to 774 (YGDNGNDEIHGGQGNDKL), 775 to 792 (YGGAGNDRLFGEYGNNYL), 793 to 810 (DGGEGDDHLEGGNGSDIL), 811 to 828 (RGGSGNDKLFGNQGDDLL), and 829 to 846 (DGGEGDDQLAGGEGNDIY). Positions 795–815 (GEGDDHLEGGNGSDILRGGSG) are disordered. The segment at 990-1009 (KGKSSSLMSSSRSSSMLTQK) is disordered. The span at 993 to 1006 (SSSLMSSSRSSSML) shows a compositional bias: low complexity.

This sequence belongs to the RTX prokaryotic toxin (TC 1.C.11) family. As to quaternary structure, interacts specifically with the superoxide dismutase [Cu-Zn]. This interaction may protect LtxA from reactive oxygen species and reactive nitrogen species produced by host inflammatory cells during disease. Interacts with the human leukocyte adhesion glycoprotein LFA-1 (ITGAL-ITGB2). Post-translationally, acylated at Lys-562 and Lys-687 by LtxC. This modification is required for full activity. Isolated methyl esters contain palmitoyl and palmitolyl fatty acyl groups with smaller quantities of myristic and stearic fatty acids.

Its subcellular location is the cell outer membrane. The protein localises to the secreted. In terms of biological role, virulence factor that plays an important role in immune evasion. Lyses human lymphocytes and monocytes. Binds to the LFA-1 integrin on the surface of the host cell and to cholesterol-containing membranes, which probably results in large LtxA-LFA-1 clusters in lipid rafts. Also shows beta-hemolytic activity on certain types of growth media. The sequence is that of Leukotoxin from Aggregatibacter actinomycetemcomitans (Actinobacillus actinomycetemcomitans).